The chain runs to 154 residues: SsrA-binding protein (154 aa).

The interval 134-154 (QREDLKRRAEDRDTQRELARF) is disordered.

This sequence belongs to the SmpB family.

The protein localises to the cytoplasm. Required for rescue of stalled ribosomes mediated by trans-translation. Binds to transfer-messenger RNA (tmRNA), required for stable association of tmRNA with ribosomes. tmRNA and SmpB together mimic tRNA shape, replacing the anticodon stem-loop with SmpB. tmRNA is encoded by the ssrA gene; the 2 termini fold to resemble tRNA(Ala) and it encodes a 'tag peptide', a short internal open reading frame. During trans-translation Ala-aminoacylated tmRNA acts like a tRNA, entering the A-site of stalled ribosomes, displacing the stalled mRNA. The ribosome then switches to translate the ORF on the tmRNA; the nascent peptide is terminated with the 'tag peptide' encoded by the tmRNA and targeted for degradation. The ribosome is freed to recommence translation, which seems to be the essential function of trans-translation. This Nitratidesulfovibrio vulgaris (strain ATCC 29579 / DSM 644 / CCUG 34227 / NCIMB 8303 / VKM B-1760 / Hildenborough) (Desulfovibrio vulgaris) protein is SsrA-binding protein.